The chain runs to 1370 residues: DNA-directed RNA polymerase subunit beta (1370 aa).

This sequence belongs to the RNA polymerase beta chain family. The RNAP catalytic core consists of 2 alpha, 1 beta, 1 beta' and 1 omega subunit. When a sigma factor is associated with the core the holoenzyme is formed, which can initiate transcription.

It catalyses the reaction RNA(n) + a ribonucleoside 5'-triphosphate = RNA(n+1) + diphosphate. Its function is as follows. DNA-dependent RNA polymerase catalyzes the transcription of DNA into RNA using the four ribonucleoside triphosphates as substrates. The sequence is that of DNA-directed RNA polymerase subunit beta from Polaromonas naphthalenivorans (strain CJ2).